The primary structure comprises 467 residues: Glutamate--tRNA ligase (467 aa).

Positions 14 to 24 (PSPTGFLHLGG) match the 'HIGH' region motif. Positions 124–134 (PRYDGTWRPEP) are enriched in basic and acidic residues. The segment at 124–156 (PRYDGTWRPEPGKTLPPVPAGRKPVVRFKNPQD) is disordered. The 'KMSKS' region motif lies at 246 to 250 (KLSKR). K249 lines the ATP pocket.

Belongs to the class-I aminoacyl-tRNA synthetase family. Glutamate--tRNA ligase type 1 subfamily. As to quaternary structure, monomer.

The protein localises to the cytoplasm. The enzyme catalyses tRNA(Glu) + L-glutamate + ATP = L-glutamyl-tRNA(Glu) + AMP + diphosphate. In terms of biological role, catalyzes the attachment of glutamate to tRNA(Glu) in a two-step reaction: glutamate is first activated by ATP to form Glu-AMP and then transferred to the acceptor end of tRNA(Glu). The chain is Glutamate--tRNA ligase from Bordetella petrii (strain ATCC BAA-461 / DSM 12804 / CCUG 43448).